The primary structure comprises 375 residues: Chaperone protein DnaJ (375 aa).

One can recognise a J domain in the interval 5 to 70 (DYYDVLGVNR…QKRGAYDQFG (66 aa)). The CR-type zinc finger occupies 135 to 213 (GCEKQIRIPS…CHGAGQKKTT (79 aa)). Zn(2+)-binding residues include Cys-148, Cys-151, Cys-165, Cys-168, Cys-187, Cys-190, Cys-201, and Cys-204. 4 CXXCXGXG motif repeats span residues 148–155 (CSTCNGTG), 165–172 (CATCGGHG), 187–194 (CPTCHGTG), and 201–208 (CGSCHGAG).

Belongs to the DnaJ family. Homodimer. The cofactor is Zn(2+).

The protein localises to the cytoplasm. Participates actively in the response to hyperosmotic and heat shock by preventing the aggregation of stress-denatured proteins and by disaggregating proteins, also in an autonomous, DnaK-independent fashion. Unfolded proteins bind initially to DnaJ; upon interaction with the DnaJ-bound protein, DnaK hydrolyzes its bound ATP, resulting in the formation of a stable complex. GrpE releases ADP from DnaK; ATP binding to DnaK triggers the release of the substrate protein, thus completing the reaction cycle. Several rounds of ATP-dependent interactions between DnaJ, DnaK and GrpE are required for fully efficient folding. Also involved, together with DnaK and GrpE, in the DNA replication of plasmids through activation of initiation proteins. The sequence is that of Chaperone protein DnaJ from Chromobacterium violaceum (strain ATCC 12472 / DSM 30191 / JCM 1249 / CCUG 213 / NBRC 12614 / NCIMB 9131 / NCTC 9757 / MK).